Here is a 1019-residue protein sequence, read N- to C-terminus: StAR-related lipid transfer protein 8 (1019 aa).

2 disordered regions span residues 92-122 (QPLL…KVKK) and 134-154 (SLRR…CLAT). Polar residues predominate over residues 100–115 (SPSNQPFLSPPQGQEG). S108 is modified (phosphoserine). Positions 134-147 (SLRRKEKGDSRQTE) are enriched in basic and acidic residues. Residue R168 is modified to Asymmetric dimethylarginine. Residues S234 and S237 each carry the phosphoserine modification. 2 disordered regions span residues 325 to 355 (MYPD…EVAT) and 406 to 482 (APAQ…VGAS). Residues 334-347 (KEEEEEEEEEEEEA) are compositionally biased toward acidic residues. Polar residues-rich tracts occupy residues 418-430 (NSTA…SSLS) and 437-455 (ISDT…NSMN). Phosphoserine occurs at positions 494 and 502. The Rho-GAP domain maps to 569-773 (PPLIHVQRTG…HMISDCKKLF (205 aa)). The disordered stretch occupies residues 731-754 (DSSSPRIKSKRSLVGRPGPRDLSE). Residues 805-1013 (AQAAGVSLSL…RDSFPTLQAA (209 aa)) enclose the START domain.

Binds both the SH2 and PTB domains of TNS1.

The protein resides in the cell junction. Its subcellular location is the focal adhesion. Functionally, accelerates GTPase activity of RHOA and CDC42, but not RAC1. Stimulates the hydrolysis of phosphatidylinositol 4,5-bisphosphate by PLCD1. In Mus musculus (Mouse), this protein is StAR-related lipid transfer protein 8 (Stard8).